The sequence spans 73 residues: DNA-directed RNA polymerase subunit Rpo10 (73 aa).

Zn(2+) is bound by residues Cys-7, Cys-10, Cys-44, and Cys-45.

This sequence belongs to the archaeal Rpo10/eukaryotic RPB10 RNA polymerase subunit family. Part of the RNA polymerase complex. Forms an Rpo3-Rpo10-Rpo11-Rpo12 complex upon coexpression. The cofactor is Zn(2+).

The protein resides in the cytoplasm. It catalyses the reaction RNA(n) + a ribonucleoside 5'-triphosphate = RNA(n+1) + diphosphate. Functionally, DNA-dependent RNA polymerase (RNAP) catalyzes the transcription of DNA into RNA using the four ribonucleoside triphosphates as substrates. This Methanocaldococcus jannaschii (strain ATCC 43067 / DSM 2661 / JAL-1 / JCM 10045 / NBRC 100440) (Methanococcus jannaschii) protein is DNA-directed RNA polymerase subunit Rpo10.